The chain runs to 926 residues: Glycogenin (926 aa).

Residues Leu-10, Thr-12, Tyr-16, and Arg-85 each contribute to the UDP site. Positions 10, 12, 16, 85, 94, 111, 112, 113, 145, 146, 184, 187, and 188 each coordinate UDP-alpha-D-glucose. UDP is bound by residues Asp-111, Ala-112, and Asp-113. Residue Asp-111 coordinates Mn(2+). Asp-113 contacts Mn(2+). Tyr-219 is a glycosylation site (O-linked (Glc...) tyrosine). UDP-binding residues include His-236, Gly-239, and Lys-242. His-236 is a Mn(2+) binding site. Gly-239 and Lys-242 together coordinate UDP-alpha-D-glucose. 5 disordered regions span residues 379–432 (PSVS…PEMS), 452–476 (YYAHPESHRPATEHKEPEYPTLPKE), 547–584 (SIQNPTPPHPAHSQHQSHATGMGMAGQAPKSPSPPPRH), 611–749 (MSGK…ETVQ), and 768–903 (LPHA…PNTD). Over residues 386–402 (LTPPPADAAPAPAPAPV) the composition is skewed to pro residues. Residues 404-413 (TQTEQKTAQP) show a composition bias toward polar residues. Residues 456 to 469 (PESHRPATEHKEPE) are compositionally biased toward basic and acidic residues. Positions 557-566 (AHSQHQSHAT) are enriched in low complexity. Polar residues predominate over residues 655-683 (SLHSLQSVPGTPRTQYSTFGKSPRLTNAR). A compositionally biased stretch (acidic residues) spans 692 to 704 (EQPEDSADGDDEN). The span at 733-745 (DRWAQTDRVKTVD) shows a compositional bias: basic and acidic residues. A compositionally biased stretch (gly residues) spans 788 to 798 (SGNGRAGGGGQ). Residues 800-812 (EAQTQHQSTYYEY) are compositionally biased toward polar residues. Composition is skewed to low complexity over residues 813–824 (QQQHPHSQQSRQ) and 851–875 (HAQGLAQAQAQAHGQPQGQGANPNL).

The protein belongs to the glycosyltransferase 8 family. Glycogenin subfamily. Mn(2+) serves as cofactor.

The protein resides in the cytoplasm. It localises to the vacuole. The catalysed reaction is L-tyrosyl-[glycogenin] + UDP-alpha-D-glucose = alpha-D-glucosyl-L-tyrosyl-[glycogenin] + UDP + H(+). It carries out the reaction [1,4-alpha-D-glucosyl](n)-L-tyrosyl-[glycogenin] + UDP-alpha-D-glucose = [1,4-alpha-D-glucosyl](n+1)-L-tyrosyl-[glycogenin] + UDP + H(+). Self-glucosylating initiator of glycogen synthesis. It catalyzes the formation of a short alpha (1,4)-glucosyl chain covalently attached via a glucose 1-O-tyrosyl linkage to internal tyrosine residues and these chains act as primers for the elongation reaction catalyzed by glycogen synthase. The sequence is that of Glycogenin from Cryptococcus neoformans var. grubii serotype A (strain H99 / ATCC 208821 / CBS 10515 / FGSC 9487) (Filobasidiella neoformans var. grubii).